We begin with the raw amino-acid sequence, 529 residues long: Bifunctional purine biosynthesis protein PurH (529 aa).

An MGS-like domain is found at methionine 1–valine 148.

This sequence belongs to the PurH family.

It catalyses the reaction (6R)-10-formyltetrahydrofolate + 5-amino-1-(5-phospho-beta-D-ribosyl)imidazole-4-carboxamide = 5-formamido-1-(5-phospho-D-ribosyl)imidazole-4-carboxamide + (6S)-5,6,7,8-tetrahydrofolate. The catalysed reaction is IMP + H2O = 5-formamido-1-(5-phospho-D-ribosyl)imidazole-4-carboxamide. Its pathway is purine metabolism; IMP biosynthesis via de novo pathway; 5-formamido-1-(5-phospho-D-ribosyl)imidazole-4-carboxamide from 5-amino-1-(5-phospho-D-ribosyl)imidazole-4-carboxamide (10-formyl THF route): step 1/1. It participates in purine metabolism; IMP biosynthesis via de novo pathway; IMP from 5-formamido-1-(5-phospho-D-ribosyl)imidazole-4-carboxamide: step 1/1. The sequence is that of Bifunctional purine biosynthesis protein PurH from Salmonella paratyphi C (strain RKS4594).